The chain runs to 368 residues: Protein HGH1 homolog (368 aa).

The protein belongs to the HGH1 family.

This Drosophila pseudoobscura pseudoobscura (Fruit fly) protein is Protein HGH1 homolog.